The following is a 130-amino-acid chain: Small ribosomal subunit protein uS9 (130 aa).

The disordered stretch occupies residues 105-130; that stretch reads TRDPRMKERKKYGLKGARRAPQFSKR. The span at 111-130 shows a compositional bias: basic residues; the sequence is KERKKYGLKGARRAPQFSKR.

It belongs to the universal ribosomal protein uS9 family.

This Bacillus pumilus (strain SAFR-032) protein is Small ribosomal subunit protein uS9.